The primary structure comprises 734 residues: Photosystem I P700 chlorophyll a apoprotein A2 (734 aa).

8 consecutive transmembrane segments (helical) span residues 46–69 (IFAS…FHVA), 135–158 (LYIG…LHLQ), 175–199 (LNHH…HVAI), 273–291 (MAHH…GHMY), 330–353 (LHFQ…QHMY), 369–395 (AALY…IFFI), 417–439 (AIIS…LYVH), and 517–535 (FLVH…LILV). [4Fe-4S] cluster is bound by residues C559 and C568. 2 consecutive transmembrane segments (helical) span residues 575-596 (AFYL…YWHW) and 643-665 (LSVW…MFLI). Positions 654, 662, and 670 each coordinate chlorophyll a. Residue W671 coordinates phylloquinone. Residues 707-727 (LVGLAHFSVGYIFTYAAFLIA) form a helical membrane-spanning segment.

This sequence belongs to the PsaA/PsaB family. As to quaternary structure, the PsaA/B heterodimer binds the P700 chlorophyll special pair and subsequent electron acceptors. PSI consists of a core antenna complex that captures photons, and an electron transfer chain that converts photonic excitation into a charge separation. The eukaryotic PSI reaction center is composed of at least 11 subunits. P700 is a chlorophyll a/chlorophyll a' dimer, A0 is one or more chlorophyll a, A1 is one or both phylloquinones and FX is a shared 4Fe-4S iron-sulfur center. serves as cofactor.

It is found in the plastid. The protein resides in the chloroplast thylakoid membrane. It carries out the reaction reduced [plastocyanin] + hnu + oxidized [2Fe-2S]-[ferredoxin] = oxidized [plastocyanin] + reduced [2Fe-2S]-[ferredoxin]. In terms of biological role, psaA and PsaB bind P700, the primary electron donor of photosystem I (PSI), as well as the electron acceptors A0, A1 and FX. PSI is a plastocyanin-ferredoxin oxidoreductase, converting photonic excitation into a charge separation, which transfers an electron from the donor P700 chlorophyll pair to the spectroscopically characterized acceptors A0, A1, FX, FA and FB in turn. Oxidized P700 is reduced on the lumenal side of the thylakoid membrane by plastocyanin. This Populus alba (White poplar) protein is Photosystem I P700 chlorophyll a apoprotein A2.